The sequence spans 477 residues: Pentatricopeptide repeat-containing protein At5g47360 (477 aa).

PPR repeat units lie at residues 129-163 (NVKT…NVCA), 164-198 (DTVA…GLYP), 199-233 (DVIT…DCVL), 234-264 (NSVT…MEKE), 273-307 (NAVT…GCMP), 308-343 (NRVT…GGVS), 344-378 (LSEC…GVRP), 379-413 (DGLA…DVKS), and 416-450 (DSDI…KMRL).

This sequence belongs to the PPR family. P subfamily.

This Arabidopsis thaliana (Mouse-ear cress) protein is Pentatricopeptide repeat-containing protein At5g47360.